Here is a 1410-residue protein sequence, read N- to C-terminus: DNA-directed RNA polymerase subunit beta' (1410 aa).

The Zn(2+) site is built by C70, C72, C85, and C88. Residues D460, D462, and D464 each contribute to the Mg(2+) site. Zn(2+) contacts are provided by C814, C888, C895, and C898.

It belongs to the RNA polymerase beta' chain family. In terms of assembly, the RNAP catalytic core consists of 2 alpha, 1 beta, 1 beta' and 1 omega subunit. When a sigma factor is associated with the core the holoenzyme is formed, which can initiate transcription. Mg(2+) serves as cofactor. The cofactor is Zn(2+).

It carries out the reaction RNA(n) + a ribonucleoside 5'-triphosphate = RNA(n+1) + diphosphate. In terms of biological role, DNA-dependent RNA polymerase catalyzes the transcription of DNA into RNA using the four ribonucleoside triphosphates as substrates. The polypeptide is DNA-directed RNA polymerase subunit beta' (Shewanella denitrificans (strain OS217 / ATCC BAA-1090 / DSM 15013)).